A 318-amino-acid chain; its full sequence is Sucrose operon repressor (318 aa).

The region spanning 1–56 is the HTH lacI-type domain; it reads MIKLEDVANKAGVSVTTVSRVINRKGYLSDATISKVEKAMQDLHYIPNAAARSLQG. The H-T-H motif DNA-binding region spans 4–23; the sequence is LEDVANKAGVSVTTVSRVIN.

Functionally, this protein may control the expression of the genes that are involved in the transport and catabolism of sucrose. This is Sucrose operon repressor (sacR) from Lactococcus lactis subsp. lactis (Streptococcus lactis).